Here is a 105-residue protein sequence, read N- to C-terminus: Small ribosomal subunit protein bS20 (105 aa).

It belongs to the bacterial ribosomal protein bS20 family.

Its function is as follows. Binds directly to 16S ribosomal RNA. The chain is Small ribosomal subunit protein bS20 from Caldanaerobacter subterraneus subsp. tengcongensis (strain DSM 15242 / JCM 11007 / NBRC 100824 / MB4) (Thermoanaerobacter tengcongensis).